Here is a 61-residue protein sequence, read N- to C-terminus: Conotoxin 3 (61 aa).

The first 21 residues, 1 to 21, serve as a signal peptide directing secretion; it reads MRCLPVFVILLLLIASVPSDA. Residues 22–48 constitute a propeptide that is removed on maturation; that stretch reads VQLKTKDDMPLPSFNGNARRTPRMLSN. A 6'-bromotryptophan modification is found at Trp58.

This sequence belongs to the conotoxin T superfamily. Post-translationally, contains 2 disulfide bonds that can be either 'C1-C3, C2-C4' or 'C1-C4, C2-C3', since these disulfide connectivities have been observed for conotoxins with cysteine framework V (for examples, see AC P0DQQ7 and AC P81755). In terms of processing, contains 2 disulfide bonds. Expressed by the venom duct.

It localises to the secreted. The chain is Conotoxin 3 from Conus textile (Cloth-of-gold cone).